Consider the following 107-residue polypeptide: MPYIYLIIAISTEVIGSAFLKSSEGFSKFIPSLGTIISFGICFYFLSKTMQHLPLNITYATWAGLGLVLTTVVSIIIFKEQINLITIVSIVLIIVGVVSLNIFGTSH.

Over 1 to 2 (MP) the chain is Cytoplasmic. Residues 3 to 20 (YIYLIIAISTEVIGSAFL) form a helical membrane-spanning segment. Topologically, residues 21-29 (KSSEGFSKF) are extracellular. A helical membrane pass occupies residues 30–47 (IPSLGTIISFGICFYFLS). Over 48-56 (KTMQHLPLN) the chain is Cytoplasmic. The chain crosses the membrane as a helical span at residues 57-75 (ITYATWAGLGLVLTTVVSI). Residues 76 to 85 (IIFKEQINLI) lie on the Extracellular side of the membrane. The helical transmembrane segment at 86–103 (TIVSIVLIIVGVVSLNIF) threads the bilayer. Residues 104-107 (GTSH) are Cytoplasmic-facing.

It belongs to the drug/metabolite transporter (DMT) superfamily. Small multidrug resistance (SMR) (TC 2.A.7.1) family.

Its subcellular location is the cell membrane. Ethidium export is inhibited by N-ethylmaleimide (NEM). Functionally, multidrug exporter. Is implicated for the resistance to bacteriocidal quaternary ammonium compounds and ethidium bromide. The polypeptide is Quaternary ammonium compound-resistance protein QacC (Staphylococcus aureus).